The chain runs to 338 residues: MAPNVFGLATKATGLAKAKSLSSRAYVTFLAGNGDYWKGVVGLVKGLRKAKSAYPLVVACLPDVPEEHRRILINQGCIVREIEPVYPPHNQTQFAMAYYVINYSKLRIWEFVEYSKMIYLDGDIQVFDNIDHLFDLPDGYFYAVMDCFCEKTWSHTPQYKVGYCQQCPDKVQWTEDLGPKPSLYFNAGMFVYEPSLSTYDDLLKTLKVTPPTPFAEQDFLNMYFRDVYKPIPNDYNLVLAMLWRHPENVDLEKVKVVHYCAAGSKPWRYTGKEENMDREDIKMLIKKWWDIYDDESLDYKNSNVVMNAVDGEVEAQKIMEALSEAGVVHYITAPSAAS.

Lys105 is an active-site residue. The Mn(2+) site is built by Asp121, Asp123, and His258.

The protein belongs to the glycosyltransferase 8 family. Galactosyltransferase subfamily. It depends on a divalent metal cation as a cofactor.

Its subcellular location is the cytoplasm. It catalyses the reaction myo-inositol + UDP-alpha-D-galactose = alpha-D-galactosyl-(1-&gt;3)-1D-myo-inositol + UDP + H(+). Its function is as follows. Galactinol synthase involved in the biosynthesis of raffinose family oligosaccharides (RFOs) that function as osmoprotectants. May promote plant stress tolerance. The protein is Galactinol synthase 2 (GOLS2) of Solanum lycopersicum (Tomato).